We begin with the raw amino-acid sequence, 891 residues long: Valine--tRNA ligase (891 aa).

Residues 43–53 (PFTSGTLHLGH) carry the 'HIGH' region motif. Residues 536–540 (KMSKS) carry the 'KMSKS' region motif. Lysine 539 serves as a coordination point for ATP.

Belongs to the class-I aminoacyl-tRNA synthetase family. ValS type 2 subfamily.

It is found in the cytoplasm. The enzyme catalyses tRNA(Val) + L-valine + ATP = L-valyl-tRNA(Val) + AMP + diphosphate. Functionally, catalyzes the attachment of valine to tRNA(Val). As ValRS can inadvertently accommodate and process structurally similar amino acids such as threonine, to avoid such errors, it has a 'posttransfer' editing activity that hydrolyzes mischarged Thr-tRNA(Val) in a tRNA-dependent manner. In Pyrococcus abyssi (strain GE5 / Orsay), this protein is Valine--tRNA ligase.